The primary structure comprises 67 residues: Conotoxin AbVIM (67 aa).

Residues 1–17 (VLIIAVLFLTACQLIAT) form the signal peptide. Residues 18–40 (ASYARSERKHPDLRLSSRNSKLS) constitute a propeptide that is removed on maturation. Disulfide bonds link Cys43–Cys57, Cys50–Cys61, and Cys56–Cys66.

It belongs to the conotoxin O1 superfamily. As to expression, expressed by the venom duct.

The protein resides in the secreted. In Conus abbreviatus (Abbreviated cone), this protein is Conotoxin AbVIM.